The primary structure comprises 343 residues: Multidrug resistance protein MdtN (343 aa).

Over Met-1–Lys-12 the chain is Cytoplasmic. The chain crosses the membrane as a helical; Signal-anchor for type II membrane protein span at residues Phe-13–Val-33. Residues Asp-34–Gln-343 lie on the Periplasmic side of the membrane.

This sequence belongs to the membrane fusion protein (MFP) (TC 8.A.1) family. Could be part of a tripartite efflux system composed of MdtN, MdtO and MdtP.

It is found in the cell inner membrane. Could be involved in resistance to puromycin, acriflavine and tetraphenylarsonium chloride. In Shigella flexneri, this protein is Multidrug resistance protein MdtN (mdtN).